A 744-amino-acid chain; its full sequence is MTTATRFPQFSQDLASDPTTRRLWYGIATAHDFETHDGMTEERLYQKLFATHFGHLAIIFLWASGNVFHIAWQGNYEQWVANPTGVTPIAHAIWDPHFGKAAVEAFTQPGGGGPVNAAYSGLYYWFNTIGLRTNGDLYAGAIGLLLLAAVFLFAGWLHLQPRFRPSLSWFKNAEARLNHHLAGLFGVSSLAWTGHLVHVAIPESRGQHVGWDNFLTTLPHPAGLKPFFTLNWGVYAQNPDTANHVWGTAEGAGTAILTFLGGFNPNTQSLWLTDMAHHHLAIAVIFIVAGHMYRTNWGIGHSIREILGAHNPPKGTPFGGLLGEGHKGLYDTVNNSLHFQLALALACLGVVTSLVAQHMYALNPYVFMSMDHTTEAALYTHHQYIAGFLMVGAFAHGAIFLVRDYDPEANKNNVLARVLDHKEAIISHLSWVSLFLGFHTLGLYVHNDVMQAFGTPEKQILIEPVFAQFIQASHGKMIYGMDVLLSNPDSLASTAWPNYGNVWLPGWLQAINDPNGSLFLPIGPGDFLVHHAIALGLHTTTLILVKGALDARGSKLMPDKKDFGYSFPCDGPGRGGTCDISAWDAFYLAMFWMLNTIGWVTFYWHWKQLGVWSGNTAQFNENSTYLMGWLRDYLWANSAQLINGYNPYGMNNLAVWAWMFLFGHLVWATGFMFLISWRGYWQELIETLVWAHERTPLAKLIRWKDKPVAMSIVQGRLVGLAHFTVGYVLTYAAFVIASTASQSG.

8 helical membrane passes run 48–71, 137–160, 177–201, 275–293, 337–360, 376–402, 424–446, and 527–545; these read LFAT…FHIA, LYAG…LHLQ, LNHH…HVAI, MAHH…GHMY, LHFQ…QHMY, AALY…IFLV, AIIS…LYVH, and FLVH…LILV. [4Fe-4S] cluster is bound by residues C569 and C578. A run of 2 helical transmembrane segments spans residues 585-606 and 653-675; these read AFYL…YWHW and LAVW…MFLI. Chlorophyll a-binding residues include H664, M672, and Y680. Residue W681 participates in phylloquinone binding. Residues 717-737 form a helical membrane-spanning segment; sequence LVGLAHFTVGYVLTYAAFVIA.

The protein belongs to the PsaA/PsaB family. As to quaternary structure, the PsaA/B heterodimer binds the P700 chlorophyll special pair and subsequent electron acceptors. PSI consists of a core antenna complex that captures photons, and an electron transfer chain that converts photonic excitation into a charge separation. The cyanobacterial PSI reaction center is composed of one copy each of PsaA,B,C,D,E,F,I,J,K,L,M and X, and forms trimeric complexes. It depends on PSI electron transfer chain: 5 chlorophyll a, 1 chlorophyll a', 2 phylloquinones and 3 4Fe-4S clusters. PSI core antenna: 90 chlorophyll a, 22 carotenoids, 3 phospholipids and 1 galactolipid. P700 is a chlorophyll a/chlorophyll a' dimer, A0 is one or more chlorophyll a, A1 is one or both phylloquinones and FX is a shared 4Fe-4S iron-sulfur center. as a cofactor.

It localises to the cellular thylakoid membrane. The catalysed reaction is reduced [plastocyanin] + hnu + oxidized [2Fe-2S]-[ferredoxin] = oxidized [plastocyanin] + reduced [2Fe-2S]-[ferredoxin]. Functionally, psaA and PsaB bind P700, the primary electron donor of photosystem I (PSI), as well as the electron acceptors A0, A1 and FX. PSI is a plastocyanin/cytochrome c6-ferredoxin oxidoreductase, converting photonic excitation into a charge separation, which transfers an electron from the donor P700 chlorophyll pair to the spectroscopically characterized acceptors A0, A1, FX, FA and FB in turn. Oxidized P700 is reduced on the lumenal side of the thylakoid membrane by plastocyanin or cytochrome c6. The protein is Photosystem I P700 chlorophyll a apoprotein A2 of Synechococcus sp. (strain JA-2-3B'a(2-13)) (Cyanobacteria bacterium Yellowstone B-Prime).